We begin with the raw amino-acid sequence, 274 residues long: Large ribosomal subunit protein uL2 (274 aa).

Disordered stretches follow at residues 34 to 54 and 224 to 261; these read LEKK…TRHI and VAMN…KTRA.

This sequence belongs to the universal ribosomal protein uL2 family. In terms of assembly, part of the 50S ribosomal subunit. Forms a bridge to the 30S subunit in the 70S ribosome.

Functionally, one of the primary rRNA binding proteins. Required for association of the 30S and 50S subunits to form the 70S ribosome, for tRNA binding and peptide bond formation. It has been suggested to have peptidyltransferase activity; this is somewhat controversial. Makes several contacts with the 16S rRNA in the 70S ribosome. The protein is Large ribosomal subunit protein uL2 of Ectopseudomonas mendocina (strain ymp) (Pseudomonas mendocina).